A 257-amino-acid chain; its full sequence is Putative hydro-lyase Bphy_2364 (257 aa).

Belongs to the D-glutamate cyclase family.

The sequence is that of Putative hydro-lyase Bphy_2364 from Paraburkholderia phymatum (strain DSM 17167 / CIP 108236 / LMG 21445 / STM815) (Burkholderia phymatum).